Reading from the N-terminus, the 117-residue chain is Large ribosomal subunit protein bL19 (117 aa).

It belongs to the bacterial ribosomal protein bL19 family.

In terms of biological role, this protein is located at the 30S-50S ribosomal subunit interface and may play a role in the structure and function of the aminoacyl-tRNA binding site. This Blochmanniella floridana protein is Large ribosomal subunit protein bL19.